A 1166-amino-acid chain; its full sequence is ATP-dependent helicase/deoxyribonuclease subunit B (1166 aa).

Positions 1 to 278 constitute a UvrD-like helicase ATP-binding domain; the sequence is MGAEFLVGRS…LNLDITYKEL (278 aa). 7 residues coordinate ATP: Ser10, Gly11, Lys14, Thr15, Lys16, Thr236, and Arg283. The UvrD-like helicase C-terminal domain maps to 281 to 586; it reads TERHTKTPEL…TFSLIPPALD (306 aa). Positions 801, 1121, 1124, and 1130 each coordinate [4Fe-4S] cluster.

This sequence belongs to the helicase family. AddB/RexB type 1 subfamily. In terms of assembly, heterodimer of AddA and AddB. At low magnesium concentrations there is no nuclease activity, but helicase activity is unaffected. is required as a cofactor. The cofactor is Mg(2+). It depends on [4Fe-4S] cluster as a cofactor.

The heterodimer acts both as a highly processive, ATP-dependent DNA helicase and as an ATP-dependent single-stranded exonuclease, acting in both directions. Recognizes the B.subtilis Chi site (5'-AGCGG-3') which transforms the enzyme from a helicase which degrades both DNA strands to one with only 5' to 3' exonuclease activity. This generates a double-stranded DNA with a protruding 3'-terminated single-stranded tail suitable for the initiation of homologous recombination (Chi fragment). The AddB nuclease domain is not required for Chi fragment generation but for recognition of the Chi site; this subunit has 5' -&gt; 3' nuclease activity but no helicase activity. The helicase activity of isolated AddA acts on 3'-tailed substrate and requires AddB to bind to blunt-ended DNA. RecA thread formation during DNA double-strand break repair requires RecJ or AddAB. The sequence is that of ATP-dependent helicase/deoxyribonuclease subunit B from Bacillus subtilis (strain 168).